The sequence spans 269 residues: 4-hydroxy-tetrahydrodipicolinate reductase (269 aa).

Residues Gly-8–Met-13 and Glu-34 each bind NAD(+). Arg-35 serves as a coordination point for NADP(+). NAD(+) is bound by residues Gly-98–Thr-100 and Ala-122–Tyr-125. His-155 functions as the Proton donor/acceptor in the catalytic mechanism. (S)-2,3,4,5-tetrahydrodipicolinate is bound at residue His-156. Lys-159 functions as the Proton donor in the catalytic mechanism. Gly-165–Thr-166 contributes to the (S)-2,3,4,5-tetrahydrodipicolinate binding site.

This sequence belongs to the DapB family.

Its subcellular location is the cytoplasm. The catalysed reaction is (S)-2,3,4,5-tetrahydrodipicolinate + NAD(+) + H2O = (2S,4S)-4-hydroxy-2,3,4,5-tetrahydrodipicolinate + NADH + H(+). It catalyses the reaction (S)-2,3,4,5-tetrahydrodipicolinate + NADP(+) + H2O = (2S,4S)-4-hydroxy-2,3,4,5-tetrahydrodipicolinate + NADPH + H(+). It participates in amino-acid biosynthesis; L-lysine biosynthesis via DAP pathway; (S)-tetrahydrodipicolinate from L-aspartate: step 4/4. In terms of biological role, catalyzes the conversion of 4-hydroxy-tetrahydrodipicolinate (HTPA) to tetrahydrodipicolinate. In Vibrio vulnificus (strain YJ016), this protein is 4-hydroxy-tetrahydrodipicolinate reductase.